The chain runs to 302 residues: Dermonecrotic toxin LiSicTox-alphaIA1bii (302 aa).

Positions 1–14 (ARVVLGCWSVLSQA) are cleaved as a signal peptide. The propeptide occupies 15–22 (AQTDDEER). His-34 is a catalytic residue. Mg(2+) is bound by residues Glu-54 and Asp-56. Residue His-70 is the Nucleophile of the active site. Intrachain disulfides connect Cys-74-Cys-80 and Cys-76-Cys-219. Asp-114 is a Mg(2+) binding site.

This sequence belongs to the arthropod phospholipase D family. Class II subfamily. Class IIa sub-subfamily. Requires Mg(2+) as cofactor. As to expression, expressed by the venom gland.

The protein localises to the secreted. The catalysed reaction is an N-(acyl)-sphingosylphosphocholine = an N-(acyl)-sphingosyl-1,3-cyclic phosphate + choline. It carries out the reaction an N-(acyl)-sphingosylphosphoethanolamine = an N-(acyl)-sphingosyl-1,3-cyclic phosphate + ethanolamine. The enzyme catalyses a 1-acyl-sn-glycero-3-phosphocholine = a 1-acyl-sn-glycero-2,3-cyclic phosphate + choline. It catalyses the reaction a 1-acyl-sn-glycero-3-phosphoethanolamine = a 1-acyl-sn-glycero-2,3-cyclic phosphate + ethanolamine. In terms of biological role, dermonecrotic toxins cleave the phosphodiester linkage between the phosphate and headgroup of certain phospholipids (sphingolipid and lysolipid substrates), forming an alcohol (often choline) and a cyclic phosphate. This toxin acts on sphingomyelin (SM). It may also act on ceramide phosphoethanolamine (CPE), lysophosphatidylcholine (LPC) and lysophosphatidylethanolamine (LPE), but not on lysophosphatidylserine (LPS), and lysophosphatidylglycerol (LPG). It acts by transphosphatidylation, releasing exclusively cyclic phosphate products as second products. Induces hemolysis, dermonecrosis, vascular permeability and platelet aggregation. This is Dermonecrotic toxin LiSicTox-alphaIA1bii from Loxosceles intermedia (Brown spider).